Consider the following 290-residue polypeptide: Acetyl-coenzyme A carboxylase carboxyl transferase subunit beta (290 aa).

Residues 28 to 290 (IMTKCPKCKK…TGGEYEWLQD (263 aa)) enclose the CoA carboxyltransferase N-terminal domain. The Zn(2+) site is built by C32, C35, C51, and C54. A C4-type zinc finger spans residues 32 to 54 (CPKCKKIMLTKELDKNLRVCMNC).

The protein belongs to the AccD/PCCB family. Acetyl-CoA carboxylase is a heterohexamer composed of biotin carboxyl carrier protein (AccB), biotin carboxylase (AccC) and two subunits each of ACCase subunit alpha (AccA) and ACCase subunit beta (AccD). Zn(2+) is required as a cofactor.

Its subcellular location is the cytoplasm. It carries out the reaction N(6)-carboxybiotinyl-L-lysyl-[protein] + acetyl-CoA = N(6)-biotinyl-L-lysyl-[protein] + malonyl-CoA. The protein operates within lipid metabolism; malonyl-CoA biosynthesis; malonyl-CoA from acetyl-CoA: step 1/1. In terms of biological role, component of the acetyl coenzyme A carboxylase (ACC) complex. Biotin carboxylase (BC) catalyzes the carboxylation of biotin on its carrier protein (BCCP) and then the CO(2) group is transferred by the transcarboxylase to acetyl-CoA to form malonyl-CoA. The polypeptide is Acetyl-coenzyme A carboxylase carboxyl transferase subunit beta (Bacillus velezensis (strain DSM 23117 / BGSC 10A6 / LMG 26770 / FZB42) (Bacillus amyloliquefaciens subsp. plantarum)).